The primary structure comprises 227 residues: Octanoyltransferase (227 aa).

The BPL/LPL catalytic domain maps to 43–218; that stretch reads ADSQDELWIV…TFTKTLGYQE (176 aa). Substrate is bound by residues 82-89, 149-151, and 162-164; these read RGGQVTYH, SLG, and GLA. Cys-180 functions as the Acyl-thioester intermediate in the catalytic mechanism.

This sequence belongs to the LipB family.

It is found in the cytoplasm. The catalysed reaction is octanoyl-[ACP] + L-lysyl-[protein] = N(6)-octanoyl-L-lysyl-[protein] + holo-[ACP] + H(+). It functions in the pathway protein modification; protein lipoylation via endogenous pathway; protein N(6)-(lipoyl)lysine from octanoyl-[acyl-carrier-protein]: step 1/2. Catalyzes the transfer of endogenously produced octanoic acid from octanoyl-acyl-carrier-protein onto the lipoyl domains of lipoate-dependent enzymes. Lipoyl-ACP can also act as a substrate although octanoyl-ACP is likely to be the physiological substrate. This chain is Octanoyltransferase, found in Shewanella denitrificans (strain OS217 / ATCC BAA-1090 / DSM 15013).